Consider the following 874-residue polypeptide: Ectonucleotide pyrophosphatase/phosphodiesterase family member 3 (874 aa).

Residues M1 to E11 are Cytoplasmic-facing. The helical; Signal-anchor for type II membrane protein transmembrane segment at P12–A30 threads the bilayer. Over L31–I874 the chain is Extracellular. SMB domains follow at residues Q51 to T93 and Q94 to P138. Disulfide bonds link C54/C58, C54/C71, C58/C89, C69/C71, C69/C82, C75/C81, C82/C89, C98/C115, C103/C133, C113/C126, C119/C125, C144/C190, and C152/C364. Positions R78 to D80 match the Cell attachment site motif. The interval P160–T544 is phosphodiesterase. Position 167 (D167) interacts with Zn(2+). ATP is bound at residue K204. T205 is a Zn(2+) binding site. T205 (nucleophile) is an active-site residue. N226 serves as a coordination point for ATP. N-linked (GlcNAc...) asparagine glycosylation is present at N236. D275 is a binding site for ATP. N-linked (GlcNAc...) asparagine glycans are attached at residues N279 and N288. Y289 lines the ATP pocket. The Zn(2+) site is built by D325, H329, D372, and H373. Disulfide bonds link C380/C477, C428/C817, C561/C623, C574/C679, C576/C664, and C786/C796. N425 carries an N-linked (GlcNAc...) asparagine glycan. Residue H482 coordinates Zn(2+). Residues N532, N594, N687, and N701 are each glycosylated (N-linked (GlcNAc...) asparagine). Residues N581–I874 are nuclease. Residues D751, N753, D755, H757, and D759 each contribute to the Ca(2+) site. N820 carries N-linked (GlcNAc...) asparagine glycosylation.

In terms of assembly, monomer and homodimer. Zn(2+) is required as a cofactor. Post-translationally, N-glycosylated. N-glycosylation is necessary for normal transport to the cell membrane, but is not the apical targeting signal. Detected at the tip of villi in the small intestine. Detected on basophils and mast cells (at protein level). Detected in the epithelial layer of the small intestine; expression is higher in the proximal part and lower in the distal part of the small intestine.

The protein resides in the cell membrane. It is found in the apical cell membrane. It localises to the secreted. It carries out the reaction a ribonucleoside 5'-triphosphate + H2O = a ribonucleoside 5'-phosphate + diphosphate + H(+). It catalyses the reaction UDP-N-acetyl-alpha-D-glucosamine + H2O = N-acetyl-alpha-D-glucosamine 1-phosphate + UMP + 2 H(+). The catalysed reaction is ATP + H2O = AMP + diphosphate + H(+). The enzyme catalyses CTP + H2O = CMP + diphosphate + H(+). It carries out the reaction GTP + H2O = GMP + diphosphate + H(+). It catalyses the reaction UTP + H2O = UMP + diphosphate + H(+). The catalysed reaction is Hydrolytically removes 5'-nucleotides successively from the 3'-hydroxy termini of 3'-hydroxy-terminated oligonucleotides.. The enzyme catalyses P(1),P(3)-bis(5'-adenosyl) triphosphate + H2O = AMP + ADP + 2 H(+). It carries out the reaction P(1),P(4)-bis(5'-adenosyl) tetraphosphate + H2O = AMP + ATP + 2 H(+). It catalyses the reaction P(1),P(5)-bis(5'-adenosyl) pentaphosphate + H2O = adenosine 5'-tetraphosphate + AMP + 2 H(+). The catalysed reaction is P(1),P(4)-bis(5'-guanosyl) tetraphosphate + H2O = GMP + GTP + 2 H(+). Its function is as follows. Hydrolase that metabolizes extracellular nucleotides, including ATP, GTP, UTP and CTP. Limits mast cells and basophils response during inflammation and during the chronic phases of allergic responses by eliminating extracellular ATP, a signaling molecule activating these cells in an autocrine manner. Metabolizes extracellular ATP in the lumen of the small intestine, and thereby prevents ATP-induced apoptosis of intestinal plasmacytoid dendritic cells. Has a broad specificity and can also hydrolyze UDP-GlcNAc into UMP and GlcNAc-1-phosphate and potentially several other intracellular nucleotide sugars, including UDP-GalNAc, CMP-NeuAc, GDP-Fuc, and UDP-GlcA. Thereby, could modulate glycan biosynthesis and protein glycosylation. Can hydrolyze extracellular dinucleoside polyphosphates, including the vasoactive adenosine polyphosphates as well. In addition, displays an alkaline phosphodiesterase activity in vitro. This Mus musculus (Mouse) protein is Ectonucleotide pyrophosphatase/phosphodiesterase family member 3.